We begin with the raw amino-acid sequence, 258 residues long: MYFQNSTQLGWWFLAELIGTFILIIFGNGAVAQVNLKKMATSETKAKFLTVALTWGIGVLFGVLTANAIFKGSGHLNPAISLFYAINGSIKSPTALIWPGFVIGILAQFLGAMIAQTTLNFLFWKQLSSTDPQTVLAMHCTSPSVFNITRNFLTEFIATLILIGGVVAASHFLHNNPNSVPPGFMGLWLVAGIIIAFGGATGSAINPARDLGTRIVFQLTPIKNKDANWKYSWIPVIAPLSAGLVLSIIIGFSPAPVL.

The next 2 helical transmembrane spans lie at 11-31 and 50-70; these read WWFL…NGAV and TVAL…NAIF. Positions 77–79 match the NPA 1 motif; sequence NPA. The next 3 membrane-spanning stretches (helical) occupy residues 95–115, 152–172, and 180–200; these read ALIW…AMIA, FLTE…ASHF, and VPPG…FGGA. An NPA 2 motif is present at residues 206 to 208; the sequence is NPA. A helical membrane pass occupies residues 233–253; the sequence is WIPVIAPLSAGLVLSIIIGFS.

Belongs to the MIP/aquaporin (TC 1.A.8) family.

The protein resides in the cell membrane. The enzyme catalyses glycerol(in) = glycerol(out). Functionally, mediates glycerol diffusion across the cytoplasmic membrane via a pore-type mechanism. The protein is Probable glycerol uptake facilitator protein (glpF) of Mycoplasma genitalium (strain ATCC 33530 / DSM 19775 / NCTC 10195 / G37) (Mycoplasmoides genitalium).